We begin with the raw amino-acid sequence, 127 residues long: Protein ApaG (127 aa).

In terms of domain architecture, ApaG spans 3 to 127; that stretch reads DDPRYRVEVE…FVLSVPRTLH (125 aa).

The protein is Protein ApaG of Xanthomonas axonopodis pv. citri (strain 306).